Reading from the N-terminus, the 214-residue chain is Large ribosomal subunit protein uL16 (214 aa).

Arg32 bears the Citrulline mark. Lys175 is covalently cross-linked (Glycyl lysine isopeptide (Lys-Gly) (interchain with G-Cter in SUMO2)). Lys188 participates in a covalent cross-link: Glycyl lysine isopeptide (Lys-Gly) (interchain with G-Cter in ubiquitin).

The protein belongs to the universal ribosomal protein uL16 family. In terms of assembly, component of the large ribosomal subunit. Mature ribosomes consist of a small (40S) and a large (60S) subunit. The 40S subunit contains about 33 different proteins and 1 molecule of RNA (18S). The 60S subunit contains about 49 different proteins and 3 molecules of RNA (28S, 5.8S and 5S). Citrullinated by PADI4. In terms of processing, ufmylated by UFL1.

It localises to the cytoplasm. In terms of biological role, component of the large ribosomal subunit. Plays a role in the formation of actively translating ribosomes. May play a role in the embryonic brain development. This chain is Large ribosomal subunit protein uL16 (RPL10), found in Oryctolagus cuniculus (Rabbit).